A 191-amino-acid chain; its full sequence is Fe/S biogenesis protein NfuA (191 aa).

Positions 149 and 152 each coordinate [4Fe-4S] cluster.

This sequence belongs to the NfuA family. In terms of assembly, homodimer. [4Fe-4S] cluster serves as cofactor.

Involved in iron-sulfur cluster biogenesis. Binds a 4Fe-4S cluster, can transfer this cluster to apoproteins, and thereby intervenes in the maturation of Fe/S proteins. Could also act as a scaffold/chaperone for damaged Fe/S proteins. The protein is Fe/S biogenesis protein NfuA of Pectobacterium atrosepticum (strain SCRI 1043 / ATCC BAA-672) (Erwinia carotovora subsp. atroseptica).